The sequence spans 210 residues: Large ribosomal subunit protein uL16 (210 aa).

The protein belongs to the universal ribosomal protein uL16 family. In terms of assembly, component of the large ribosomal subunit. Mature ribosomes consist of a small (40S) and a large (60S) subunit. The 40S subunit contains about 33 different proteins and 1 molecule of RNA (18S). The 60S subunit contains about 49 different proteins and 3 molecules of RNA (28S, 5.8S and 5S).

Its subcellular location is the cytoplasm. Component of the large ribosomal subunit. Plays a role in the formation of actively translating ribosomes. Functionally, (Microbial infection) Seems to bind to the leucine zipper of viral and cellular JUN. The protein is Large ribosomal subunit protein uL16 of Gallus gallus (Chicken).